The chain runs to 505 residues: MFS efflux pump atnC (505 aa).

Transmembrane regions (helical) follow at residues 48-68 (VLQV…GLTV), 117-137 (LIGW…IPYG), 148-168 (VLLL…LVCW), 181-201 (LFQC…ATIA), 216-236 (LQAT…VLMA), 240-260 (WTPC…LIAL), 304-324 (VAGL…LDFL), 343-363 (LSLR…LLLF), 377-399 (LLIA…LSPT), 403-425 (AILV…ASLW), 439-459 (TVAI…SLMY), and 469-489 (WVGL…GVLL).

It belongs to the major facilitator superfamily.

It is found in the membrane. The protein operates within secondary metabolite biosynthesis. In terms of biological role, MFS efflux pump; part of the gene cluster that mediates the biosynthesis of aspercryptins, linear lipopeptides built from six amino acids including 2 highly unusual and nonproteogenic amino acids, 2-amino-octanoic acid (2aoa) and 2-amino-dodecanol (2adol). The polypeptide is MFS efflux pump atnC (Emericella nidulans (strain FGSC A4 / ATCC 38163 / CBS 112.46 / NRRL 194 / M139) (Aspergillus nidulans)).